The primary structure comprises 309 residues: tRNA dimethylallyltransferase (309 aa).

ATP is bound at residue 10 to 17 (GPTAVGKT). 12 to 17 (TAVGKT) contacts substrate. Positions 35–38 (DSMQ) are interaction with substrate tRNA.

This sequence belongs to the IPP transferase family. As to quaternary structure, monomer. It depends on Mg(2+) as a cofactor.

The enzyme catalyses adenosine(37) in tRNA + dimethylallyl diphosphate = N(6)-dimethylallyladenosine(37) in tRNA + diphosphate. Its function is as follows. Catalyzes the transfer of a dimethylallyl group onto the adenine at position 37 in tRNAs that read codons beginning with uridine, leading to the formation of N6-(dimethylallyl)adenosine (i(6)A). This chain is tRNA dimethylallyltransferase, found in Clostridium botulinum (strain Eklund 17B / Type B).